The sequence spans 1040 residues: Desmoglein-4 (1040 aa).

Positions 1–23 are cleaved as a signal peptide; that stretch reads MDWLLFRNICLLILFMVVLGVNS. Positions 24 to 49 are excised as a propeptide; sequence EFIVEVKELDIENGTTTWQTVRRQKR. 4 consecutive Cadherin domains span residues 50–157, 158–269, 270–385, and 389–497; these read EWIK…PPVF, TQNV…FPIL, EKTS…GPTF, and SMTF…CPVI. The Extracellular segment spans residues 50 to 633; it reads EWIKFAAACR…RQSNVGLGPA (584 aa). Asparagine 110 carries an N-linked (GlcNAc...) asparagine glycan. Asparagine 545 carries N-linked (GlcNAc...) asparagine glycosylation. A helical membrane pass occupies residues 634 to 654; sequence GIGMIILGLLLLFLSPLLLLM. Residues 655-1040 are Cytoplasmic-facing; it reads CCCKRRQPEG…RYSNIHYSRQ (386 aa). Desmoglein repeat repeat units follow at residues 883 to 909 and 910 to 940; these read TLSE…IVTE and TYTA…ETVM. The tract at residues 1015-1040 is disordered; sequence QTTRSTSPMTSQHRVTRYSNIHYSRQ.

Interacts with JUP.

Its subcellular location is the cell membrane. It localises to the cell junction. The protein localises to the desmosome. In terms of biological role, a component of desmosome cell-cell junctions which are required for positive regulation of cellular adhesion. Coordinates the transition from proliferation to differentiation in hair follicle keratinocytes. Plays a role in moderating lymphocyte migration to inflamed skin and maintaining homeostasis of the epidermal inflammatory response. The chain is Desmoglein-4 (Dsg4) from Rattus norvegicus (Rat).